The following is a 129-amino-acid chain: Glycine cleavage system H protein (129 aa).

The 83-residue stretch at 24–106 (TYTVGITEHA…YAGGWIFKIK (83 aa)) folds into the Lipoyl-binding domain. At lysine 65 the chain carries N6-lipoyllysine.

This sequence belongs to the GcvH family. As to quaternary structure, the glycine cleavage system is composed of four proteins: P, T, L and H. Requires (R)-lipoate as cofactor.

Its function is as follows. The glycine cleavage system catalyzes the degradation of glycine. The H protein shuttles the methylamine group of glycine from the P protein to the T protein. The polypeptide is Glycine cleavage system H protein (Escherichia coli O7:K1 (strain IAI39 / ExPEC)).